The chain runs to 143 residues: Lysozyme C (143 aa).

Positions 1–15 are cleaved as a signal peptide; it reads MRCLLLLLLVPVPGA. Residues 16–143 form the C-type lysozyme domain; sequence KVFERCEWAR…LSSYVAGCGV (128 aa). 4 cysteine pairs are disulfide-bonded: C21–C141, C45–C129, C79–C94, and C90–C108. Residues E50 and D67 contribute to the active site.

It belongs to the glycosyl hydrolase 22 family. As to quaternary structure, monomer.

It is found in the secreted. The catalysed reaction is Hydrolysis of (1-&gt;4)-beta-linkages between N-acetylmuramic acid and N-acetyl-D-glucosamine residues in a peptidoglycan and between N-acetyl-D-glucosamine residues in chitodextrins.. Its function is as follows. Lysozymes have primarily a bacteriolytic function; those in tissues and body fluids are associated with the monocyte-macrophage system and enhance the activity of immunoagents. The protein is Lysozyme C (lys) of Scophthalmus maximus (Turbot).